A 365-amino-acid polypeptide reads, in one-letter code: 5-hydroxytryptamine receptor 1E (365 aa).

The Extracellular portion of the chain corresponds to Met1–Lys22. Residues Asn2 and Asn5 are each glycosylated (N-linked (GlcNAc...) asparagine). Residues Met23 to Ile47 form a helical membrane-spanning segment. The Cytoplasmic portion of the chain corresponds to Cys48 to Tyr59. A helical membrane pass occupies residues Leu60–Tyr82. Residues Ile83 to Glu96 are Extracellular-facing. Cys95 and Cys173 are disulfide-bonded. The helical transmembrane segment at Val97–Leu118 threads the bilayer. Asp102 and Thr107 together coordinate ergotamine. Residues Asp119 to Tyr121 carry the DRY motif; important for ligand-induced conformation changes motif. The Cytoplasmic portion of the chain corresponds to Asp119–Arg138. Residues Ala139 to Trp160 form a helical membrane-spanning segment. Over Arg161–His179 the chain is Extracellular. Ile175 lines the ergotamine pocket. The helical transmembrane segment at Val180–Tyr202 threads the bilayer. The Cytoplasmic portion of the chain corresponds to Tyr203–Arg291. The chain crosses the membrane as a helical span at residues Ile292–Val314. Residues Gly315 to Glu324 lie on the Extracellular side of the membrane. A helical transmembrane segment spans residues Val325–Phe347. Positions Asn340 to Tyr344 match the NPxxY motif; important for ligand-induced conformation changes and signaling motif. At Asn348–Thr365 the chain is on the cytoplasmic side.

It belongs to the G-protein coupled receptor 1 family. As to expression, detected in the brain with the greatest abundance in the hippocampus, followed by the olfactory bulb. Lower levels are detected in the cortex, thalamus, pons, hypothalamus, midbrain, striatum, and cerebellum.

Its subcellular location is the cell membrane. In terms of biological role, G-protein coupled receptor for 5-hydroxytryptamine (serotonin). Also functions as a receptor for various alkaloids and psychoactive substances. Ligand binding causes a conformation change that triggers signaling via guanine nucleotide-binding proteins (G proteins) and modulates the activity of down-stream effectors, such as adenylate cyclase. Signaling inhibits adenylate cyclase activity. This Cavia porcellus (Guinea pig) protein is 5-hydroxytryptamine receptor 1E (5HT1E).